The sequence spans 109 residues: MVKKIQESKEKKALKAASGTRKDKKKWGDGRKKEEVRRAVTVSEELLAKVRKDVGRASVVTRYMIGSRYNLNLGVAENVLRHLSNEGVVQQVLGNRRMTIYAGCRAQEQ.

Residues 1 to 13 (MVKKIQESKEKKA) are compositionally biased toward basic and acidic residues. Residues 1 to 34 (MVKKIQESKEKKALKAASGTRKDKKKWGDGRKKE) form a disordered region.

The protein belongs to the eukaryotic ribosomal protein eS25 family.

This is Small ribosomal subunit protein eS25 (RPS25-1) from Encephalitozoon cuniculi (strain GB-M1) (Microsporidian parasite).